The primary structure comprises 569 residues: 3-oxosteroid 1-dehydrogenase (569 aa).

10 to 39 (DVVVVGSGAAGMVAALTAAHQGLSTVVVEK) lines the FAD pocket. Positions 127–148 (PGGKPTGRSVEPKPFDANKLGP) are disordered.

The protein belongs to the FAD-dependent oxidoreductase 2 family. 3-oxosteroid dehydrogenase subfamily. The cofactor is FAD.

It carries out the reaction a 3-oxosteroid + A = a 3-oxo-Delta(1)-steroid + AH2. The catalysed reaction is a 3-oxo-Delta(4)-steroid + A = a 3-oxo-Delta(1,4)-steroid + AH2. Its function is as follows. Catalyzes the elimination of the C-1 and C-2 hydrogen atoms of the A-ring from the polycyclic ring structure of 3-ketosteroids. Is also involved in the formation of 1,4-androstadiene-3,17-dione (ADD) from 4-androstene-3,17-dione (AD) to. The chain is 3-oxosteroid 1-dehydrogenase (ksdD) from Mycolicibacterium smegmatis (strain ATCC 700084 / mc(2)155) (Mycobacterium smegmatis).